The sequence spans 574 residues: (R)-mandelonitrile lyase 4 (574 aa).

The signal sequence occupies residues 1–27 (MEKSTMSAVVLVLNLLVLHLQYSEVHS). Asn-30 is a glycosylation site (N-linked (GlcNAc...) asparagine). 64–65 (TS) serves as a coordination point for FAD. N-linked (GlcNAc...) asparagine glycosylation occurs at Asn-76. FAD is bound by residues 83–84 (ER), Thr-134, and 138–141 (NAGV). Asn-146, Asn-151, and Asn-179 each carry an N-linked (GlcNAc...) asparagine glycan. Residue Val-245 coordinates FAD. N-linked (GlcNAc...) asparagine glycans are attached at residues Asn-268 and Asn-310. Cys-357 is a substrate binding site. 3 N-linked (GlcNAc...) asparagine glycosylation sites follow: Asn-381, Asn-407, and Asn-468. Cys-428 and Cys-479 are oxidised to a cystine. Residue Tyr-486 coordinates substrate. Residues 487 to 488 (WH) and Gly-516 contribute to the FAD site. Residue His-488 is the Proton donor of the active site. Catalysis depends on His-526, which acts as the Proton acceptor. 527 to 528 (PQ) is an FAD binding site.

It belongs to the GMC oxidoreductase family. Monomer. FAD is required as a cofactor.

It localises to the vacuole. It is found in the aleurone grain. The enzyme catalyses (R)-mandelonitrile = benzaldehyde + hydrogen cyanide. Its function is as follows. Involved in cyanogenesis, the release of HCN from injured tissues. Catalyzes the stereospecific addition of HCN to a variety of aldehydes in vitro. It is a major seed constituent, and could have the additional role of a storage form for reduced nitrogen. This chain is (R)-mandelonitrile lyase 4 (MDL4), found in Prunus serotina (Black cherry).